A 717-amino-acid polypeptide reads, in one-letter code: Copine family protein 5 (717 aa).

The C2 domain maps to 193 to 318 (YLGGIIVSAE…KYGPGSDNVY (126 aa)). The region spanning 377-567 (ELDQRRFDGE…LNKSRIAETA (191 aa)) is the VWFA domain.

This sequence belongs to the copine family.

The sequence is that of Copine family protein 5 (cpna-5) from Caenorhabditis elegans.